A 98-amino-acid polypeptide reads, in one-letter code: Large ribosomal subunit protein eL30 (98 aa).

Belongs to the eukaryotic ribosomal protein eL30 family.

The sequence is that of Large ribosomal subunit protein eL30 from Methanosphaera stadtmanae (strain ATCC 43021 / DSM 3091 / JCM 11832 / MCB-3).